The sequence spans 172 residues: 3-hydroxydecanoyl-[acyl-carrier-protein] dehydratase (172 aa).

Residue His70 is part of the active site.

It belongs to the thioester dehydratase family. FabA subfamily. In terms of assembly, homodimer.

The protein resides in the cytoplasm. The enzyme catalyses a (3R)-hydroxyacyl-[ACP] = a (2E)-enoyl-[ACP] + H2O. The catalysed reaction is (3R)-hydroxydecanoyl-[ACP] = (2E)-decenoyl-[ACP] + H2O. It catalyses the reaction (2E)-decenoyl-[ACP] = (3Z)-decenoyl-[ACP]. Its pathway is lipid metabolism; fatty acid biosynthesis. Its function is as follows. Necessary for the introduction of cis unsaturation into fatty acids. Catalyzes the dehydration of (3R)-3-hydroxydecanoyl-ACP to E-(2)-decenoyl-ACP and then its isomerization to Z-(3)-decenoyl-ACP. Can catalyze the dehydratase reaction for beta-hydroxyacyl-ACPs with saturated chain lengths up to 16:0, being most active on intermediate chain length. The protein is 3-hydroxydecanoyl-[acyl-carrier-protein] dehydratase (fabA) of Xylella fastidiosa (strain 9a5c).